A 989-amino-acid polypeptide reads, in one-letter code: Atos homolog protein A (989 aa).

A transactivation domain 1 (TAD1) region spans residues 24-32 (TLLITEGRT). Disordered stretches follow at residues 244 to 295 (GEGG…LPPG), 393 to 477 (PDAL…KPAT), 525 to 639 (QNEQ…GLTQ), and 656 to 686 (EAEK…TPAN). Positions 254 to 270 (RSSLRLPRSPLFSRSLH) are enriched in low complexity. Residues 397-412 (FTSQEPPGHKTTWNST) show a composition bias toward polar residues. Basic and acidic residues-rich tracts occupy residues 413-423 (QDKECLKKSKD) and 460-471 (TRLDRVDRESKT). Polar residues-rich tracts occupy residues 525-544 (QNEQ…VSLS) and 600-638 (TKSQ…NGLT). Positions 656–675 (EAEKHVRDGSTCLEKDENQE) are enriched in basic and acidic residues. Residues 676–686 (PHSSLSSTPAN) are compositionally biased toward polar residues. Residues 792 to 849 (LLGNFEECVLNYRLEPLGTVEGFTAEVGASGTFCPSHMTLPVDVSFYSVSDDNAPSPY) are required for macropage invasion. The tract at residues 876 to 884 (FNPNKTVVK) is transactivation domain 2 (TAD2).

It belongs to the ATOS family.

The protein resides in the nucleus. Transcription regulator that syncronizes transcriptional and translational programs to promote macrophage invasion of tissues. In Danio rerio (Zebrafish), this protein is Atos homolog protein A (atosa).